We begin with the raw amino-acid sequence, 252 residues long: Mitochondrial peculiar membrane protein 1 (252 aa).

The tract at residues 230–252 (TTTTSKGSSPQVKHKVVSVDEDN) is disordered.

It localises to the mitochondrion membrane. The chain is Mitochondrial peculiar membrane protein 1 (MPM1) from Saccharomyces cerevisiae (strain ATCC 204508 / S288c) (Baker's yeast).